The chain runs to 192 residues: Probable cobalt-precorrin-6B C(15)-methyltransferase (decarboxylating) (192 aa).

S-adenosyl-L-methionine-binding positions include Thr-20, 44–48 (GSGTG), Glu-68, and Ala-96.

The protein belongs to the methyltransferase superfamily. Archaeal-type CbiT family.

The enzyme catalyses Co-precorrin-6B + S-adenosyl-L-methionine = Co-precorrin-7 + S-adenosyl-L-homocysteine + CO2. It participates in cofactor biosynthesis; adenosylcobalamin biosynthesis; cob(II)yrinate a,c-diamide from sirohydrochlorin (anaerobic route): step 8/10. Functionally, catalyzes the methylation of C-15 in cobalt-precorrin-6B followed by the decarboxylation of C-12 to form cobalt-precorrin-7. This chain is Probable cobalt-precorrin-6B C(15)-methyltransferase (decarboxylating), found in Sulfurisphaera tokodaii (strain DSM 16993 / JCM 10545 / NBRC 100140 / 7) (Sulfolobus tokodaii).